A 381-amino-acid chain; its full sequence is Cytochrome b (381 aa).

4 consecutive transmembrane segments (helical) span residues 34–54 (FGSL…FLAM), 78–99 (WLIR…YLHI), 114–134 (WNIG…GYVL), and 179–199 (FFAF…LHFL). Residues H84 and H98 each coordinate heme b. Heme b contacts are provided by H183 and H197. Residue H202 coordinates a ubiquinone. A run of 4 helical transmembrane segments spans residues 227–247 (YKDI…VLFL), 289–309 (LGGV…PFLH), 321–341 (LTQL…WIGG), and 348–368 (FIFI…IITP).

It belongs to the cytochrome b family. The cytochrome bc1 complex contains 3 respiratory subunits (MT-CYB, CYC1 and UQCRFS1), 2 core proteins (UQCRC1 and UQCRC2) and probably 6 low-molecular weight proteins. Requires heme b as cofactor.

It is found in the mitochondrion inner membrane. Its function is as follows. Component of the ubiquinol-cytochrome c reductase complex (complex III or cytochrome b-c1 complex) that is part of the mitochondrial respiratory chain. The b-c1 complex mediates electron transfer from ubiquinol to cytochrome c. Contributes to the generation of a proton gradient across the mitochondrial membrane that is then used for ATP synthesis. This chain is Cytochrome b (mt-cyb), found in Heterodontus francisci (Horn shark).